The sequence spans 225 residues: Ribonuclease 3 (225 aa).

Residues 5–127 form the RNase III domain; that stretch reads IDKLERKLGY…IIGAIYLDSD (123 aa). Glu40 contributes to the Mg(2+) binding site. Asp44 is an active-site residue. The Mg(2+) site is built by Asp113 and Glu116. Glu116 is an active-site residue. Residues 154-224 enclose the DRBM domain; that stretch reads DPKTRLQEFL…AETALEQLTN (71 aa).

This sequence belongs to the ribonuclease III family. As to quaternary structure, homodimer. Mg(2+) serves as cofactor.

The protein resides in the cytoplasm. The catalysed reaction is Endonucleolytic cleavage to 5'-phosphomonoester.. Its function is as follows. Digests double-stranded RNA. Involved in the processing of primary rRNA transcript to yield the immediate precursors to the large and small rRNAs (23S and 16S). Processes some mRNAs, and tRNAs when they are encoded in the rRNA operon. Processes pre-crRNA and tracrRNA of type II CRISPR loci if present in the organism. This is Ribonuclease 3 from Vibrio campbellii (strain ATCC BAA-1116).